The sequence spans 159 residues: Transcription elongation factor A protein-like 1 (159 aa).

The interval 1–97 (MDKPRKENEE…PPCGVGKHKL (97 aa)) is disordered. Basic and acidic residues predominate over residues 17-34 (KTDEERPPVEHSPEKQSP). Residues Ser28, Ser33, Ser38, Ser39, Ser43, and Ser44 each carry the phosphoserine modification. Positions 37-54 (QSSEEQSSEEEFFPEELL) are enriched in acidic residues. Residues 64–80 (SEERPPQEGLSRKDLFE) are compositionally biased toward basic and acidic residues.

The protein belongs to the TFS-II family. TFA subfamily. In terms of processing, phosphorylation of Ser-38 and Ser-39 is critical for transcriptional repression. In terms of tissue distribution, expressed in all tissues examined. Highly expressed in heart, ovary, prostate and skeletal muscle. Moderately expressed in brain, placenta, testis and small intestine. Weakly expressed in lung, liver and spleen. Expressed in several cancer cell lines.

It is found in the nucleus. In terms of biological role, may be involved in transcriptional regulation. Modulates various viral and cellular promoters in a promoter context-dependent manner. For example, transcription from the FOS promoter is increased, while Rous sarcoma virus (RSV) long terminal repeat (LTR) promoter activity is repressed. Does not bind DNA directly. This Homo sapiens (Human) protein is Transcription elongation factor A protein-like 1.